The chain runs to 423 residues: UPF0597 protein TTE0269 (423 aa).

It belongs to the UPF0597 family.

The sequence is that of UPF0597 protein TTE0269 from Caldanaerobacter subterraneus subsp. tengcongensis (strain DSM 15242 / JCM 11007 / NBRC 100824 / MB4) (Thermoanaerobacter tengcongensis).